The chain runs to 588 residues: L-fucose isomerase (588 aa).

Catalysis depends on proton acceptor residues Glu335 and Asp359. Positions 335, 359, and 525 each coordinate Mn(2+).

The protein belongs to the L-fucose isomerase family. Requires Mn(2+) as cofactor.

It is found in the cytoplasm. It carries out the reaction L-fucose = L-fuculose. It participates in carbohydrate degradation; L-fucose degradation; L-lactaldehyde and glycerone phosphate from L-fucose: step 1/3. Functionally, converts the aldose L-fucose into the corresponding ketose L-fuculose. The polypeptide is L-fucose isomerase (Streptococcus pneumoniae (strain Hungary19A-6)).